Consider the following 265-residue polypeptide: Glutamate racemase (265 aa).

Residues 7 to 8 (DS) and 39 to 40 (YG) contribute to the substrate site. Cys-70 (proton donor/acceptor) is an active-site residue. 71–72 (NT) lines the substrate pocket. Catalysis depends on Cys-182, which acts as the Proton donor/acceptor. Residue 183–184 (TH) participates in substrate binding.

This sequence belongs to the aspartate/glutamate racemases family.

It catalyses the reaction L-glutamate = D-glutamate. Its pathway is cell wall biogenesis; peptidoglycan biosynthesis. Its function is as follows. Provides the (R)-glutamate required for cell wall biosynthesis. The chain is Glutamate racemase from Lachnospira eligens (strain ATCC 27750 / DSM 3376 / VPI C15-48 / C15-B4) (Eubacterium eligens).